The following is a 312-amino-acid chain: MTQPIVVAALYKFVTLSDYVELREPLLQAMVDNGIKGTLLIADEGINGTVSGSREGIDGLMAWLKSDPRLIDIDHKESYCDEQPFYRTKVKLKKEIVTLGVEGVDPNKSVGTYVEPKDWNDLISDPEVLLIDTRNDYEVSIGTFEGAIDPKTTSFREFPEYIKAHFDPAVHKKVAMFCTGGIRCEKASSYMLGEGFEEVYHLKGGILKYLEEVPEQESHWRGECFVFDNRVTVRHDLTEGDYDQCHACRTPISAEDRASEHYSPGVSCPHCWDSLSEKTRRSAIDRQKQIELAKARNQPHPIGRNYRLPSEA.

One can recognise a Rhodanese domain in the interval 124–218 (SDPEVLLIDT…YLEEVPEQES (95 aa)). Cys178 functions as the Cysteine persulfide intermediate in the catalytic mechanism. The interval 293-312 (AKARNQPHPIGRNYRLPSEA) is disordered.

Belongs to the TrhO family.

The catalysed reaction is uridine(34) in tRNA + AH2 + O2 = 5-hydroxyuridine(34) in tRNA + A + H2O. Functionally, catalyzes oxygen-dependent 5-hydroxyuridine (ho5U) modification at position 34 in tRNAs. The polypeptide is tRNA uridine(34) hydroxylase (Pseudomonas syringae pv. syringae (strain B728a)).